The chain runs to 214 residues: Probable GTP-binding protein EngB (214 aa).

In terms of domain architecture, EngB-type G spans 40-212; sequence SLPEIVFVGK…KASFAQCIKH (173 aa). GTP contacts are provided by residues 48–55, 75–79, 93–96, 160–163, and 191–193; these read GKSNVGKS, GRTRQ, DLPG, TKSD, and VSS. Mg(2+) is bound by residues Ser-55 and Thr-77.

It belongs to the TRAFAC class TrmE-Era-EngA-EngB-Septin-like GTPase superfamily. EngB GTPase family. Requires Mg(2+) as cofactor.

In terms of biological role, necessary for normal cell division and for the maintenance of normal septation. The polypeptide is Probable GTP-binding protein EngB (Rickettsia prowazekii (strain Madrid E)).